Here is a 349-residue protein sequence, read N- to C-terminus: Probable myosin light chain kinase DDB_G0275057 (349 aa).

The segment at 1–33 (MGCFNSKEAGAGRPKTTTQQQQQATPEPTVTTA) is disordered. Residues 16–33 (TTTQQQQQATPEPTVTTA) are compositionally biased toward low complexity. The Protein kinase domain occupies 56–313 (YVVGKELGRG…AKQCLDDLWL (258 aa)). ATP is bound by residues 62–70 (LGRGAFSVV) and Lys85. The active-site Proton acceptor is Asp178.

Belongs to the protein kinase superfamily. CAMK Ser/Thr protein kinase family. CaMK subfamily.

The enzyme catalyses L-seryl-[myosin light chain] + ATP = O-phospho-L-seryl-[myosin light chain] + ADP + H(+). It catalyses the reaction L-threonyl-[myosin light chain] + ATP = O-phospho-L-threonyl-[myosin light chain] + ADP + H(+). Its activity is regulated as follows. Does not have a calmodulin-binding domain. Its function is as follows. May phosphorylate a specific serine in the N-terminus of a myosin light chain. This chain is Probable myosin light chain kinase DDB_G0275057, found in Dictyostelium discoideum (Social amoeba).